The primary structure comprises 70 residues: Large ribosomal subunit protein eL38 (70 aa).

Residue K4 forms a Glycyl lysine isopeptide (Lys-Gly) (interchain with G-Cter in SUMO2) linkage. K9 carries the N6-acetyllysine; alternate modification. Residue K9 forms a Glycyl lysine isopeptide (Lys-Gly) (interchain with G-Cter in SUMO2); alternate linkage. N6-acetyllysine is present on K67.

Belongs to the eukaryotic ribosomal protein eL38 family. Component of the large ribosomal subunit.

The protein resides in the cytoplasm. Functionally, component of the large ribosomal subunit. The ribosome is a large ribonucleoprotein complex responsible for the synthesis of proteins in the cell. The protein is Large ribosomal subunit protein eL38 (RPL38) of Homo sapiens (Human).